A 128-amino-acid chain; its full sequence is Phosphoribosyl-AMP cyclohydrolase (128 aa).

Position 77 (D77) interacts with Mg(2+). C78 is a binding site for Zn(2+). Residues D79 and D81 each contribute to the Mg(2+) site. Positions 94 and 101 each coordinate Zn(2+).

This sequence belongs to the PRA-CH family. In terms of assembly, homodimer. Requires Mg(2+) as cofactor. The cofactor is Zn(2+).

It localises to the cytoplasm. It catalyses the reaction 1-(5-phospho-beta-D-ribosyl)-5'-AMP + H2O = 1-(5-phospho-beta-D-ribosyl)-5-[(5-phospho-beta-D-ribosylamino)methylideneamino]imidazole-4-carboxamide. It participates in amino-acid biosynthesis; L-histidine biosynthesis; L-histidine from 5-phospho-alpha-D-ribose 1-diphosphate: step 3/9. Its function is as follows. Catalyzes the hydrolysis of the adenine ring of phosphoribosyl-AMP. This chain is Phosphoribosyl-AMP cyclohydrolase, found in Granulibacter bethesdensis (strain ATCC BAA-1260 / CGDNIH1).